The primary structure comprises 431 residues: Glucose-1-phosphate adenylyltransferase (431 aa).

Residue Lys-39 coordinates beta-D-fructose 1,6-bisphosphate. Residues Arg-40, His-46, and Arg-52 each coordinate AMP. Residue Tyr-114 participates in alpha-D-glucose 1-phosphate binding. AMP is bound at residue Arg-130. Alpha-D-glucose 1-phosphate contacts are provided by residues Gly-179, Glu-194–Lys-195, and Ser-212. AMP-binding residues include Glu-370 and Arg-386. Beta-D-fructose 1,6-bisphosphate-binding positions include Arg-419–Arg-423 and Gln-429–Arg-431.

The protein belongs to the bacterial/plant glucose-1-phosphate adenylyltransferase family. In terms of assembly, homotetramer.

The catalysed reaction is alpha-D-glucose 1-phosphate + ATP + H(+) = ADP-alpha-D-glucose + diphosphate. It participates in glycan biosynthesis; glycogen biosynthesis. Its activity is regulated as follows. Allosterically activated by fructose-1,6-bisphosphate (F16BP) and inhibited by AMP. Involved in the biosynthesis of ADP-glucose, a building block required for the elongation reactions to produce glycogen. Catalyzes the reaction between ATP and alpha-D-glucose 1-phosphate (G1P) to produce pyrophosphate and ADP-Glc. This Shigella dysenteriae serotype 1 (strain Sd197) protein is Glucose-1-phosphate adenylyltransferase.